We begin with the raw amino-acid sequence, 345 residues long: MAGINQTKCDLGFQITFNTVYRFSQFYTFSVSSFAVPGLIYFMFKRLFQLYFHGNLKTLLIAYFISILLYAVMLCFAFGYQFFVPFFIKSNCDLIINKTLFKYIHTSVIFLLTTPMMFPLGFSIERFTAMAMASRYENIRTLIGPVLVIFLIIPNCIIFYFLFQHETYDDTFISFLMLPNTTAVNFNTYLWFLLYLNIGNLALNVLLLLVHRKFKRRLLLHKTSLSTRYAIEEISQSSKFTLIITFTHLLFFGCNTICSILVRVLGEPFFGSFINHSVARGVNCAVPTYNLVIVVVGFVSLSKLNSRRQQEVQTTVQLKTTGKEGARNYDNITANQWATITQIGF.

Residues 1–22 (MAGINQTKCDLGFQITFNTVYR) lie on the Extracellular side of the membrane. N-linked (GlcNAc...) asparagine glycosylation occurs at N5. A helical membrane pass occupies residues 23–43 (FSQFYTFSVSSFAVPGLIYFM). Over 44-58 (FKRLFQLYFHGNLKT) the chain is Cytoplasmic. Residues 59–79 (LLIAYFISILLYAVMLCFAFG) form a helical membrane-spanning segment. Residues 80–103 (YQFFVPFFIKSNCDLIINKTLFKY) lie on the Extracellular side of the membrane. N97 carries N-linked (GlcNAc...) asparagine glycosylation. A helical membrane pass occupies residues 104 to 124 (IHTSVIFLLTTPMMFPLGFSI). At 125 to 142 (ERFTAMAMASRYENIRTL) the chain is on the cytoplasmic side. Residues 143–163 (IGPVLVIFLIIPNCIIFYFLF) form a helical membrane-spanning segment. Residues 164–189 (QHETYDDTFISFLMLPNTTAVNFNTY) are Extracellular-facing. N180 is a glycosylation site (N-linked (GlcNAc...) asparagine). A helical membrane pass occupies residues 190–210 (LWFLLYLNIGNLALNVLLLLV). The Cytoplasmic segment spans residues 211-241 (HRKFKRRLLLHKTSLSTRYAIEEISQSSKFT). Residues 242–262 (LIITFTHLLFFGCNTICSILV) form a helical membrane-spanning segment. Residues 263 to 280 (RVLGEPFFGSFINHSVAR) are Extracellular-facing. N275 carries N-linked (GlcNAc...) asparagine glycosylation. A helical membrane pass occupies residues 281-301 (GVNCAVPTYNLVIVVVGFVSL). Over 302–345 (SKLNSRRQQEVQTTVQLKTTGKEGARNYDNITANQWATITQIGF) the chain is Cytoplasmic.

The protein belongs to the nematode receptor-like protein srb family. Expressed in the head sensory neurons ASI, ASK and AWB. Not expressed in male somatic gonads or sperm.

It localises to the cell membrane. Its subcellular location is the perikaryon. The protein resides in the cell projection. The protein localises to the dendrite. In terms of biological role, G-protein coupled receptor that antagonizes the negative effects of the gcy-35 oxygen sensor on spermatogenesis. This leads to the maintenance of mitochondrial function in developing spermatocytes and/or spermatids prior to testis maturation during the early larval stages. Regulates the navigational capacity of sperm during hyperoxic conditions ensuring the proper targeting of sperm derived from males to the fertilization site in the uterus of hermaphrodites. May act in the same signaling pathway as the neuropeptide flp-21. The chain is Serpentine receptor class beta-13 from Caenorhabditis elegans.